The sequence spans 1043 residues: Isoleucine--tRNA ligase (1043 aa).

L-isoleucyl-5'-AMP is bound by residues Pro-46 and His-57. A 'HIGH' region motif is present at residues 47 to 57 (PTANGLPHVGH). Residues Cys-181 and Cys-184 each contribute to the Zn(2+) site. The L-valine site is built by His-319 and Asp-328. Residues Cys-389, Cys-392, Cys-461, Cys-464, Cys-502, and Cys-504 each contribute to the Zn(2+) site. Residues Glu-550, Gly-551, Asp-553, Gln-554, and His-581 each contribute to the L-isoleucyl-5'-AMP site. The short motif at 591–595 (KMSKS) is the 'KMSKS' region element. ATP is bound at residue Lys-594.

The protein belongs to the class-I aminoacyl-tRNA synthetase family. IleS type 2 subfamily. As to quaternary structure, monomer. Zn(2+) is required as a cofactor.

The protein resides in the cytoplasm. The catalysed reaction is tRNA(Ile) + L-isoleucine + ATP = L-isoleucyl-tRNA(Ile) + AMP + diphosphate. Its function is as follows. Catalyzes the attachment of isoleucine to tRNA(Ile). As IleRS can inadvertently accommodate and process structurally similar amino acids such as valine, to avoid such errors it has two additional distinct tRNA(Ile)-dependent editing activities. One activity is designated as 'pretransfer' editing and involves the hydrolysis of activated Val-AMP. The other activity is designated 'posttransfer' editing and involves deacylation of mischarged Val-tRNA(Ile). The sequence is that of Isoleucine--tRNA ligase (ileS) from Thermus thermophilus (strain ATCC 27634 / DSM 579 / HB8).